Consider the following 455-residue polypeptide: Bifunctional protein GlmU (455 aa).

Residues 1 to 228 form a pyrophosphorylase region; it reads MTQPLHVIIL…AQEAEGANDP (228 aa). Residues 10-13, lysine 24, glutamine 76, 81-82, 103-105, glycine 138, glutamate 153, asparagine 168, and asparagine 226 each bind UDP-N-acetyl-alpha-D-glucosamine; these read LAAG, GT, and YGD. Aspartate 105 is a Mg(2+) binding site. Asparagine 226 is a Mg(2+) binding site. The linker stretch occupies residues 229–249; the sequence is WQLSQLERAWQRRAVRALCAQ. Positions 250–455 are N-acetyltransferase; sequence GARVRDPARL…DGWKRPLKKS (206 aa). UDP-N-acetyl-alpha-D-glucosamine-binding residues include arginine 332 and lysine 350. Histidine 362 functions as the Proton acceptor in the catalytic mechanism. Residues tyrosine 365 and asparagine 376 each contribute to the UDP-N-acetyl-alpha-D-glucosamine site. Acetyl-CoA is bound by residues alanine 379, 385-386, serine 404, alanine 422, and arginine 439; that span reads NY.

The protein in the N-terminal section; belongs to the N-acetylglucosamine-1-phosphate uridyltransferase family. This sequence in the C-terminal section; belongs to the transferase hexapeptide repeat family. As to quaternary structure, homotrimer. Mg(2+) is required as a cofactor.

Its subcellular location is the cytoplasm. It catalyses the reaction alpha-D-glucosamine 1-phosphate + acetyl-CoA = N-acetyl-alpha-D-glucosamine 1-phosphate + CoA + H(+). It carries out the reaction N-acetyl-alpha-D-glucosamine 1-phosphate + UTP + H(+) = UDP-N-acetyl-alpha-D-glucosamine + diphosphate. It participates in nucleotide-sugar biosynthesis; UDP-N-acetyl-alpha-D-glucosamine biosynthesis; N-acetyl-alpha-D-glucosamine 1-phosphate from alpha-D-glucosamine 6-phosphate (route II): step 2/2. Its pathway is nucleotide-sugar biosynthesis; UDP-N-acetyl-alpha-D-glucosamine biosynthesis; UDP-N-acetyl-alpha-D-glucosamine from N-acetyl-alpha-D-glucosamine 1-phosphate: step 1/1. The protein operates within bacterial outer membrane biogenesis; LPS lipid A biosynthesis. Functionally, catalyzes the last two sequential reactions in the de novo biosynthetic pathway for UDP-N-acetylglucosamine (UDP-GlcNAc). The C-terminal domain catalyzes the transfer of acetyl group from acetyl coenzyme A to glucosamine-1-phosphate (GlcN-1-P) to produce N-acetylglucosamine-1-phosphate (GlcNAc-1-P), which is converted into UDP-GlcNAc by the transfer of uridine 5-monophosphate (from uridine 5-triphosphate), a reaction catalyzed by the N-terminal domain. The sequence is that of Bifunctional protein GlmU from Stenotrophomonas maltophilia (strain R551-3).